The following is a 713-amino-acid chain: TWiK family of potassium channels protein 12 (713 aa).

The Cytoplasmic segment spans residues M1 to R15. The chain crosses the membrane as a helical span at residues L16–F36. Residues N53, N77, and N98 are each glycosylated (N-linked (GlcNAc...) asparagine). Residues W112 to Y132 constitute an intramembrane region (pore-forming). A helical transmembrane segment spans residues I142 to E162. Residues N163–P242 are Cytoplasmic-facing. The chain crosses the membrane as a helical span at residues I243–I263. An intramembrane region (pore-forming) is located at residues T267–G287. The helical transmembrane segment at V298–I318 threads the bilayer. At T319–A713 the chain is on the cytoplasmic side.

Belongs to the two pore domain potassium channel (TC 1.A.1.8) family.

It is found in the membrane. The protein is TWiK family of potassium channels protein 12 (twk-12) of Caenorhabditis elegans.